We begin with the raw amino-acid sequence, 444 residues long: L-cysteine:1D-myo-inositol 2-amino-2-deoxy-alpha-D-glucopyranoside ligase (444 aa).

Positions Met1–His13 are enriched in basic and acidic residues. The segment at Met1 to His21 is disordered. Cys75 contacts Zn(2+). Residues Cys75–Thr78, Thr90, and Asn113–Thr115 each bind L-cysteinyl-5'-AMP. The 'HIGH' region motif lies at Ile77–His87. A 'ERGGDP' region motif is present at residues Glu219–Pro224. Trp259 contributes to the L-cysteinyl-5'-AMP binding site. Cys263 provides a ligand contact to Zn(2+). Gly281–Asp283 provides a ligand contact to L-cysteinyl-5'-AMP. His288 lines the Zn(2+) pocket. Ile315 is a binding site for L-cysteinyl-5'-AMP. The short motif at Lys321–Ser325 is the 'KMSKS' region element.

The protein belongs to the class-I aminoacyl-tRNA synthetase family. MshC subfamily. In terms of assembly, monomer. Zn(2+) serves as cofactor.

It catalyses the reaction 1D-myo-inositol 2-amino-2-deoxy-alpha-D-glucopyranoside + L-cysteine + ATP = 1D-myo-inositol 2-(L-cysteinylamino)-2-deoxy-alpha-D-glucopyranoside + AMP + diphosphate + H(+). Its function is as follows. Catalyzes the ATP-dependent condensation of GlcN-Ins and L-cysteine to form L-Cys-GlcN-Ins. The polypeptide is L-cysteine:1D-myo-inositol 2-amino-2-deoxy-alpha-D-glucopyranoside ligase (Mycolicibacterium gilvum (strain PYR-GCK) (Mycobacterium gilvum (strain PYR-GCK))).